Reading from the N-terminus, the 309-residue chain is MRKIIVGTRKSNLALTQTEWVIDQLKKAGVKNEFEIKKIVTKGDQILDVTLSKVGGKGLFVKEIEKAMFDKEIDLAVHSMKDMPAVIPEGLTISSIPEREDHRDAYLAKDNILLQDLPEGAIVGTSSLRRGAQILAERPDLTIKWIRGNIETRIRKLQEEDYDAIILAVSGLKRVGLSEELITEYLEPEVCVPAVGQGALAIESREDDEELTNIVKKIHDAYTAKTVSAERTFLHLLEGGCQVPIGGYAYLDGDEVVLTALVGDPDGTTILKETVRGTEPTEVGKEAAELLISQGAKEIVDRVKEEMDQ.

The residue at position 241 (Cys-241) is an S-(dipyrrolylmethanemethyl)cysteine.

This sequence belongs to the HMBS family. In terms of assembly, monomer. It depends on dipyrromethane as a cofactor.

It carries out the reaction 4 porphobilinogen + H2O = hydroxymethylbilane + 4 NH4(+). It participates in porphyrin-containing compound metabolism; protoporphyrin-IX biosynthesis; coproporphyrinogen-III from 5-aminolevulinate: step 2/4. In terms of biological role, tetrapolymerization of the monopyrrole PBG into the hydroxymethylbilane pre-uroporphyrinogen in several discrete steps. This chain is Porphobilinogen deaminase, found in Oceanobacillus iheyensis (strain DSM 14371 / CIP 107618 / JCM 11309 / KCTC 3954 / HTE831).